The following is a 529-amino-acid chain: Listeriolysin O (529 aa).

A signal peptide spans 1–24 (MKKIMLVFITLILVSLPIAQQTEA). The next 4 beta stranded transmembrane spans lie at 214–227 (ESQL…AFKA), 234–243 (VNFGAISEGK), 312–321 (STKVKAAFDA), and 329–341 (SGDV…IKNS). The Conserved undecapeptide signature appears at 483-493 (ECTGLAWEWWR). The Cholesterol binding motif lies at 515 to 516 (TL).

Belongs to the cholesterol-dependent cytolysin family. Homooligomeric pore complex of 35 to 50 subunits; when inserted in the host membrane.

Its subcellular location is the secreted. It localises to the host membrane. It is found in the host cell membrane. With respect to regulation, activity of listeriolysin O is regulated on multiple levels. It should be high in the phagosome, thereby allowing escape of the bacteria from the phagosomal compartment. Then, once inside the host cytosol, the activity must be controlled to prevent lysis of the host plasma membrane and loss of the intracellular environment. A cholesterol-dependent toxin that causes cytolysis by forming pores in cholesterol containing host membranes. After binding to target membranes, the protein undergoes a major conformation change, leading to its insertion in the host membrane and formation of an oligomeric pore complex. Cholesterol is required for binding to host membranes, membrane insertion and pore formation; cholesterol binding is mediated by a Thr-Leu pair in the C-terminus. Acts as a major virulence factor required for the escape of bacteria from phagosomal vacuoles and entry into the host cytosol. Can be reversibly inactivated by oxidation. In Listeria monocytogenes serotype 4b (strain F2365), this protein is Listeriolysin O (hly).